Here is a 626-residue protein sequence, read N- to C-terminus: MDLFNYSRRETSEVNIGAVPLGGPNPIRIQSMTNTPTQDTEACVAQAKRIVDAGGEYVRLTTQGVKEAENLMNINIGLRSTGYMVPLVADVHFSPKVADVAAQYAEKVRINPGNYVDPGRTFKQLEYTDEEYAAELQKIRDRFVPFLNICKENHTAVRIGVNHGSLSDRIMSRYGDTPEGMVESCMEFLRICVDEKFTDVVISIKASNTVVMVKTVRLLVSVMEQEGMSFPLHLGVTEAGDGEDGRIKSALGIGALLADGLGDTIRVSLSEEPEAEIPVARKLVDYITSRRNHPYIPGMEAPDFNYLSPVRRKTRPVRNIGGDHLPVVLADRMDGRMETHPQFTPDYIYAGRALPEQTEPGVQYILDADVWKGEPDTWPAFNYAQLELMETCAAELKFLFTPYMALTREVVACLKQHPEAVVVSQSNHPNRVGEHRALAHQLTVEGLQNPVIFFQHYAEDTAEDLQVKAGADMGALIFDGLCDGIYLFNQGKLSHAVIDATAFGILQAGRIRTSKTEYISCPGCGRTLFNLQSTIARVKEATSHLKGLKIGIMGCIVNGPGEMADADYGYVGAGRGKISLYKQKECIEKNIPEEEAVEKLIELIKANGDYEEKTSSLSSPKEKEDK.

4 residues coordinate [4Fe-4S] cluster: Cys521, Cys524, Cys555, and Glu562.

Belongs to the IspG family. [4Fe-4S] cluster is required as a cofactor.

The catalysed reaction is (2E)-4-hydroxy-3-methylbut-2-enyl diphosphate + oxidized [flavodoxin] + H2O + 2 H(+) = 2-C-methyl-D-erythritol 2,4-cyclic diphosphate + reduced [flavodoxin]. It participates in isoprenoid biosynthesis; isopentenyl diphosphate biosynthesis via DXP pathway; isopentenyl diphosphate from 1-deoxy-D-xylulose 5-phosphate: step 5/6. Functionally, converts 2C-methyl-D-erythritol 2,4-cyclodiphosphate (ME-2,4cPP) into 1-hydroxy-2-methyl-2-(E)-butenyl 4-diphosphate. The protein is 4-hydroxy-3-methylbut-2-en-1-yl diphosphate synthase (flavodoxin) of Bacteroides fragilis (strain YCH46).